A 342-amino-acid chain; its full sequence is Aristolochene synthase prx2 (342 aa).

4 residues coordinate Mg(2+): D115, N244, S248, and E252. Positions 340 and 341 each coordinate (2E,6E)-farnesyl diphosphate.

Belongs to the terpene synthase family. In terms of assembly, homodimer. Mg(2+) is required as a cofactor.

It catalyses the reaction (2E,6E)-farnesyl diphosphate = (+)-aristolochene + diphosphate. It participates in sesquiterpene biosynthesis; aristolochene biosynthesis; aristolochene from farnesyl diphosphate: step 1/1. In terms of biological role, aristolochene synthase; part of the gene cluster that mediates the biosynthesis of PR-toxin, a bicyclic sesquiterpene belonging to the eremophilane class and acting as a mycotoxin. The first step of the pathway is catalyzed by the aristolochene synthase which performs the cyclization of trans,trans-farnesyl diphosphate (FPP) to the bicyclic sesquiterpene aristolochene. Following the formation of aristolochene, the non-oxygenated aristolochene is converted to the trioxygenated intermediate eremofortin B, via 7-epi-neopetasone. This conversion appears to involve three enzymes, a hydroxysterol oxidase-like enzyme, the quinone-oxidase prx3 that forms the quinone-type-structure in the bicyclic nucleus of aristolochene with the C8-oxo group and the C-3 hydroxyl group, and the P450 monooxygenase prx9 that introduces the epoxide at the double bond between carbons 1 and 2. No monoxy or dioxy-intermediates have been reported to be released to the broth, so these three early oxidative reactions may be coupled together. Eremofortin B is further oxidized by another P450 monooxygenase, that introduces a second epoxide between carbons 7 and 11 prior to acetylation to eremofortin A by the acetyltransferase prx11. The second epoxidation may be performed by a second P450 monooxygenase. After the acetylation step, the conversion of eremofortin A to eremofortin C and then to PR-toxin requires only two enzymes. First the conversion of eremofortin A to eremofortin C proceeds by oxidation of the side chain of the molecule at C-12 and is catalyzed by the short-chain oxidoreductase prx1. The cytochrome P450 monooxygenase prx8 also plays a role in this step. The primary alcohol formed at C-12 is finally oxidized by the short-chain alcohol dehydrogenase prx4 that forms PR-toxin. This is Aristolochene synthase prx2 from Penicillium rubens (strain ATCC 28089 / DSM 1075 / NRRL 1951 / Wisconsin 54-1255) (Penicillium chrysogenum).